A 635-amino-acid polypeptide reads, in one-letter code: tRNA uridine 5-carboxymethylaminomethyl modification enzyme MnmG (635 aa).

19–24 (GAGHAG) contributes to the FAD binding site. 280 to 294 (GPRYCPSIEDKIVRF) contributes to the NAD(+) binding site.

Belongs to the MnmG family. As to quaternary structure, homodimer. Heterotetramer of two MnmE and two MnmG subunits. It depends on FAD as a cofactor.

The protein localises to the cytoplasm. In terms of biological role, NAD-binding protein involved in the addition of a carboxymethylaminomethyl (cmnm) group at the wobble position (U34) of certain tRNAs, forming tRNA-cmnm(5)s(2)U34. The polypeptide is tRNA uridine 5-carboxymethylaminomethyl modification enzyme MnmG (Synechocystis sp. (strain ATCC 27184 / PCC 6803 / Kazusa)).